The following is a 384-amino-acid chain: Zinc finger protein GLIS2 homolog (384 aa).

The segment at 128-153 adopts a C2H2-type 1 zinc-finger fold; that stretch reads FVCNWTDCDRVFDTLDALAQHVTQRH. The C2H2-type 2; degenerate zinc-finger motif lies at 163–190; that stretch reads YYCRWRGCQRSERGFNARYKMLVHTRTH. 3 C2H2-type zinc fingers span residues 196–218, 224–248, and 254–280; these read HRCH…IRSH, YKCS…TRTH, and YMCK…TFKH. The disordered stretch occupies residues 321 to 343; sequence SSSSARYYDDSNNEPSDYSLKPK.

Belongs to the GLI C2H2-type zinc-finger protein family.

It localises to the nucleus. In terms of biological role, transcription factor which represses a set of lipase genes involved in fat catabolism. This is Zinc finger protein GLIS2 homolog (sug) from Drosophila melanogaster (Fruit fly).